We begin with the raw amino-acid sequence, 1612 residues long: Phospholipid-transporting ATPase DNF2 (1612 aa).

The tract at residues 1–74 (MSSPSKPTSP…MKDISTPDLS (74 aa)) is disordered. Residues 1–252 (MSSPSKPTSP…TFFPKNILFQ (252 aa)) lie on the Cytoplasmic side of the membrane. Residues 20–30 (GSASNGLSSMS) show a composition bias toward low complexity. A Phosphothreonine modification is found at threonine 70. Serine 85 bears the Phosphoserine mark. A helical membrane pass occupies residues 253–273 (FHNFANIYFLILLILGAFQIF). The segment at 272-279 (IFGVTNPG) is involved in phosphatidylcholine substrate selection. Residues 274–277 (GVTN) lie on the Extracellular side of the membrane. The chain crosses the membrane as a helical span at residues 278–298 (PGFASVPLIVIVIITAIKDGI). The Cytoplasmic segment spans residues 299-598 (EDSRRTVLDL…RISRELNFSV (300 aa)). Residues 364–373 (KLQKKREELR) are compositionally biased toward basic and acidic residues. Positions 364-384 (KLQKKREELRRKRNSRSFGPR) are disordered. Phosphoserine occurs at positions 389, 392, 396, and 403. Residue tyrosine 406 is modified to Phosphotyrosine. The chain crosses the membrane as a helical span at residues 599 to 619 (ILNFVLLFILCFTAGIVNGVY). At 620-639 (YKQKPRSRDYFEFGTIGGSA) the chain is on the extracellular side. The interval 631-635 (EFGTI) is involved in phosphatidylcholine substrate selection. The chain crosses the membrane as a helical span at residues 640–660 (STNGFVSFWVAVILYQSLVPI). At 661–1231 (SLYISVEIIK…WCYKRLAEMI (571 aa)) the chain is on the cytoplasmic side. The 4-aspartylphosphate intermediate role is filled by aspartate 712. ATP-binding residues include aspartate 712, lysine 713, and threonine 714. Aspartate 712 serves as a coordination point for Mg(2+). Threonine 714 serves as a coordination point for Mg(2+). Threonine 782 is modified (phosphothreonine). The ATP site is built by glutamate 846, phenylalanine 887, serine 889, lysine 892, and lysine 916. Lysine 938 is covalently cross-linked (Glycyl lysine isopeptide (Lys-Gly) (interchain with G-Cter in ubiquitin)). Residues arginine 952, threonine 953, threonine 1032, glycine 1033, aspartate 1034, arginine 1147, and lysine 1153 each contribute to the ATP site. Aspartate 1173 is a binding site for Mg(2+). ATP contacts are provided by asparagine 1176 and aspartate 1177. Aspartate 1177 contributes to the Mg(2+) binding site. Residues 1232-1252 (PQFFYKNVIFTLSLFWYGIYN) form a helical membrane-spanning segment. Over 1253–1262 (NFDGSYLFEY) the chain is Extracellular. Residues 1263 to 1283 (TYLTFYNLAFTSVPVILLAVL) form a helical membrane-spanning segment. The Cytoplasmic segment spans residues 1284 to 1313 (DQDVSDTVSMLVPQLYRVGILRKEWNQTKF). A helical transmembrane segment spans residues 1314–1334 (LWYMLDGVYQSVICFFFPYLA). Topologically, residues 1335-1350 (YHKNMVVTENGLGLDH) are extracellular. A helical membrane pass occupies residues 1351 to 1371 (RYFVGVFVTAIAVTSCNFYVF). The Cytoplasmic segment spans residues 1372–1377 (MEQYRW). A helical membrane pass occupies residues 1378–1398 (DWFCGLFICLSLAVFYGWTGI). Residues 1399–1418 (WTSSSSSNEFYKGAARVFAQ) are Extracellular-facing. The helical transmembrane segment at 1419–1439 (PAYWAVLFVGVLFCLLPRFTI) threads the bilayer. Arginine 1436 lines the a 1,2-diacyl-sn-glycero-3-phospho-L-serine pocket. The Cytoplasmic portion of the chain corresponds to 1440-1612 (DCIRKIFYPK…TLLSQRSRDR (173 aa)). Serine 1542 bears the Phosphoserine mark. The disordered stretch occupies residues 1544–1563 (VTTTNNLPRRSMASARGNKL). Residue serine 1592 is modified to Phosphoserine.

The protein belongs to the cation transport ATPase (P-type) (TC 3.A.3) family. Type IV subfamily. In terms of assembly, component of a flippase complex consisting of DNF1 and LEM3. Interacts with LEM3; the interaction is direct. It depends on Mg(2+) as a cofactor. In terms of processing, phosphorylated by FPK1 and KIN82.

Its subcellular location is the cell membrane. The enzyme catalyses ATP + H2O + phospholipidSide 1 = ADP + phosphate + phospholipidSide 2.. It carries out the reaction a 1,2-diacyl-sn-glycero-3-phosphoethanolamine(out) + ATP + H2O = a 1,2-diacyl-sn-glycero-3-phosphoethanolamine(in) + ADP + phosphate + H(+). The catalysed reaction is a 1,2-diacyl-sn-glycero-3-phosphocholine(out) + ATP + H2O = a 1,2-diacyl-sn-glycero-3-phosphocholine(in) + ADP + phosphate + H(+). It catalyses the reaction a beta-D-glucosyl-(1&lt;-&gt;1')-N-acylsphing-4-enine(out) + ATP + H2O = a beta-D-glucosyl-(1&lt;-&gt;1')-N-acylsphing-4-enine(in) + ADP + phosphate + H(+). The enzyme catalyses a 1,2-diacyl-sn-glycero-3-phospho-L-serine(out) + ATP + H2O = a 1,2-diacyl-sn-glycero-3-phospho-L-serine(in) + ADP + phosphate + H(+). Its activity is regulated as follows. Phosphatidylcholine flippase activity is inhibited by glucosylsphingosine, lactosylsphingosine, lysophosphatidylcholine and to a lesser degree sphingosine-1-phosphate and lysosphingomyelin. Glucosylceramide flippase activity is inhibited by lysophosphatidylcholine, glucosylsphingosine and to a lesser degree lactosylsphingosine whereas lysosphingomyelin has a stimulatory effect at low concentrations. In terms of biological role, catalytic component of a P4-ATPase flippase complex which catalyzes the hydrolysis of ATP coupled to the transport of glucosylceramide, phosphatidylcholine, phosphatidylethanolamine, and small amounts of phosphatidylserine from the lumenal to the cytosolic leaflet of the cell membrane and ensures the maintenance of asymmetric distribution of phospholipids. Does not appear to transport sphingomyelin, inositol phosphoceramide or phosphatidic acid. Required for efficient endocytosis. Required for protein transport from Golgi to vacuoles. In Saccharomyces cerevisiae (strain ATCC 204508 / S288c) (Baker's yeast), this protein is Phospholipid-transporting ATPase DNF2 (DNF2).